The chain runs to 193 residues: Peptidyl-tRNA hydrolase (193 aa).

Tyr-14 provides a ligand contact to tRNA. The active-site Proton acceptor is His-19. 3 residues coordinate tRNA: Phe-64, Asn-66, and Asn-112.

Belongs to the PTH family. As to quaternary structure, monomer.

Its subcellular location is the cytoplasm. It carries out the reaction an N-acyl-L-alpha-aminoacyl-tRNA + H2O = an N-acyl-L-amino acid + a tRNA + H(+). Its function is as follows. Hydrolyzes ribosome-free peptidyl-tRNAs (with 1 or more amino acids incorporated), which drop off the ribosome during protein synthesis, or as a result of ribosome stalling. Catalyzes the release of premature peptidyl moieties from peptidyl-tRNA molecules trapped in stalled 50S ribosomal subunits, and thus maintains levels of free tRNAs and 50S ribosomes. The polypeptide is Peptidyl-tRNA hydrolase (Bartonella henselae (strain ATCC 49882 / DSM 28221 / CCUG 30454 / Houston 1) (Rochalimaea henselae)).